The following is a 451-amino-acid chain: Trigger factor (451 aa).

The region spanning glycine 163–proline 248 is the PPIase FKBP-type domain.

The protein belongs to the FKBP-type PPIase family. Tig subfamily.

It is found in the cytoplasm. The catalysed reaction is [protein]-peptidylproline (omega=180) = [protein]-peptidylproline (omega=0). In terms of biological role, involved in protein export. Acts as a chaperone by maintaining the newly synthesized protein in an open conformation. Functions as a peptidyl-prolyl cis-trans isomerase. In Leptospira interrogans serogroup Icterohaemorrhagiae serovar copenhageni (strain Fiocruz L1-130), this protein is Trigger factor.